Here is a 115-residue protein sequence, read N- to C-terminus: T cell receptor beta variable 11-2 (115 aa).

A signal peptide spans 1-21; it reads MGTRLLCWAALCLLGAELTEA. Positions 22 to 115 constitute an Ig-like domain; that stretch reads GVAQSPRYKI…SAVYLCASSL (94 aa). An intrachain disulfide couples C42 to C111.

Alpha-beta TR is a heterodimer composed of an alpha and beta chain; disulfide-linked. The alpha-beta TR is associated with the transmembrane signaling CD3 coreceptor proteins to form the TR-CD3 (TcR or TCR). The assembly of alpha-beta TR heterodimers with CD3 occurs in the endoplasmic reticulum where a single alpha-beta TR heterodimer associates with one CD3D-CD3E heterodimer, one CD3G-CD3E heterodimer and one CD247 homodimer forming a stable octameric structure. CD3D-CD3E and CD3G-CD3E heterodimers preferentially associate with TR alpha and TR beta chains, respectively. The association of the CD247 homodimer is the last step of TcR assembly in the endoplasmic reticulum and is required for transport to the cell surface.

Its subcellular location is the cell membrane. Its function is as follows. V region of the variable domain of T cell receptor (TR) beta chain that participates in the antigen recognition. Alpha-beta T cell receptors are antigen specific receptors which are essential to the immune response and are present on the cell surface of T lymphocytes. Recognize peptide-major histocompatibility (MH) (pMH) complexes that are displayed by antigen presenting cells (APC), a prerequisite for efficient T cell adaptive immunity against pathogens. Binding of alpha-beta TR to pMH complex initiates TR-CD3 clustering on the cell surface and intracellular activation of LCK that phosphorylates the ITAM motifs of CD3G, CD3D, CD3E and CD247 enabling the recruitment of ZAP70. In turn ZAP70 phosphorylates LAT, which recruits numerous signaling molecules to form the LAT signalosome. The LAT signalosome propagates signal branching to three major signaling pathways, the calcium, the mitogen-activated protein kinase (MAPK) kinase and the nuclear factor NF-kappa-B (NF-kB) pathways, leading to the mobilization of transcription factors that are critical for gene expression and essential for T cell growth and differentiation. The T cell repertoire is generated in the thymus, by V-(D)-J rearrangement. This repertoire is then shaped by intrathymic selection events to generate a peripheral T cell pool of self-MH restricted, non-autoaggressive T cells. Post-thymic interaction of alpha-beta TR with the pMH complexes shapes TR structural and functional avidity. This is T cell receptor beta variable 11-2 from Homo sapiens (Human).